Here is a 628-residue protein sequence, read N- to C-terminus: ATP-dependent zinc metalloprotease FtsH (628 aa).

The Stromal portion of the chain corresponds to 1 to 7; the sequence is MKLSWKT. The chain crosses the membrane as a helical span at residues 8–28; that stretch reads LLLWSLPIFVVGFFFWQGFLG. At 29–118 the chain is on the lumenal side; that stretch reads PTTTDVGSNI…AHPPKSTSAV (90 aa). A helical membrane pass occupies residues 119–139; sequence WGLLGNLLFPLILVGGLAFLF. Residues 140-628 are Stromal-facing; the sequence is RRSNNASGGP…PEKNYYISQF (489 aa). 213 to 220 is an ATP binding site; it reads GPPGTGKT. Histidine 434 is a binding site for Zn(2+). Residue glutamate 435 is part of the active site. Zn(2+) contacts are provided by histidine 438 and aspartate 512.

The protein in the central section; belongs to the AAA ATPase family. In the C-terminal section; belongs to the peptidase M41 family. As to quaternary structure, homohexamer. The cofactor is Zn(2+).

Its subcellular location is the plastid. It is found in the chloroplast thylakoid membrane. In terms of biological role, acts as a processive, ATP-dependent zinc metallopeptidase. The protein is ATP-dependent zinc metalloprotease FtsH of Porphyra purpurea (Red seaweed).